A 258-amino-acid chain; its full sequence is Imidazole glycerol phosphate synthase subunit HisF (258 aa).

Active-site residues include Asp-11 and Asp-130.

Belongs to the HisA/HisF family. In terms of assembly, heterodimer of HisH and HisF.

It localises to the cytoplasm. The enzyme catalyses 5-[(5-phospho-1-deoxy-D-ribulos-1-ylimino)methylamino]-1-(5-phospho-beta-D-ribosyl)imidazole-4-carboxamide + L-glutamine = D-erythro-1-(imidazol-4-yl)glycerol 3-phosphate + 5-amino-1-(5-phospho-beta-D-ribosyl)imidazole-4-carboxamide + L-glutamate + H(+). It participates in amino-acid biosynthesis; L-histidine biosynthesis; L-histidine from 5-phospho-alpha-D-ribose 1-diphosphate: step 5/9. In terms of biological role, IGPS catalyzes the conversion of PRFAR and glutamine to IGP, AICAR and glutamate. The HisF subunit catalyzes the cyclization activity that produces IGP and AICAR from PRFAR using the ammonia provided by the HisH subunit. This Shigella dysenteriae serotype 1 (strain Sd197) protein is Imidazole glycerol phosphate synthase subunit HisF.